A 600-amino-acid polypeptide reads, in one-letter code: Aspartate--tRNA(Asp/Asn) ligase (600 aa).

Glutamate 175 serves as a coordination point for L-aspartate. Positions 199 to 202 (QLFK) are aspartate. L-aspartate is bound at residue arginine 221. ATP contacts are provided by residues 221–223 (RDE) and glutamine 230. Residue histidine 453 participates in L-aspartate binding. Residue glutamate 487 coordinates ATP. Arginine 494 is a binding site for L-aspartate. 539 to 542 (GWDR) lines the ATP pocket. The disordered stretch occupies residues 564–600 (GGVDPLTDAPAPITPLQRKESGIDAKPKAAENKPEEK). The span at 580 to 600 (QRKESGIDAKPKAAENKPEEK) shows a compositional bias: basic and acidic residues.

Belongs to the class-II aminoacyl-tRNA synthetase family. Type 1 subfamily. Homodimer.

Its subcellular location is the cytoplasm. The catalysed reaction is tRNA(Asx) + L-aspartate + ATP = L-aspartyl-tRNA(Asx) + AMP + diphosphate. Aspartyl-tRNA synthetase with relaxed tRNA specificity since it is able to aspartylate not only its cognate tRNA(Asp) but also tRNA(Asn). Reaction proceeds in two steps: L-aspartate is first activated by ATP to form Asp-AMP and then transferred to the acceptor end of tRNA(Asp/Asn). The chain is Aspartate--tRNA(Asp/Asn) ligase from Corynebacterium efficiens (strain DSM 44549 / YS-314 / AJ 12310 / JCM 11189 / NBRC 100395).